Reading from the N-terminus, the 198-residue chain is Outer-membrane lipoprotein carrier protein (198 aa).

The signal sequence occupies residues 1 to 16; the sequence is MKKWLVVFFLSASALA.

It belongs to the LolA family. Monomer.

It is found in the periplasm. Participates in the translocation of lipoproteins from the inner membrane to the outer membrane. Only forms a complex with a lipoprotein if the residue after the N-terminal Cys is not an aspartate (The Asp acts as a targeting signal to indicate that the lipoprotein should stay in the inner membrane). The sequence is that of Outer-membrane lipoprotein carrier protein from Vibrio vulnificus (strain YJ016).